Consider the following 51-residue polypeptide: Methionine aminopeptidase (51 aa).

The protein belongs to the peptidase M24A family. Methionine aminopeptidase type 1 subfamily. Monomer. The cofactor is Co(2+). Zn(2+) is required as a cofactor. Mn(2+) serves as cofactor. It depends on Fe(2+) as a cofactor.

It carries out the reaction Release of N-terminal amino acids, preferentially methionine, from peptides and arylamides.. Its function is as follows. Removes the N-terminal methionine from nascent proteins. The N-terminal methionine is often cleaved when the second residue in the primary sequence is small and uncharged (Met-Ala-, Cys, Gly, Pro, Ser, Thr, or Val). Requires deformylation of the N(alpha)-formylated initiator methionine before it can be hydrolyzed. This is Methionine aminopeptidase (map) from Geobacillus stearothermophilus (Bacillus stearothermophilus).